A 594-amino-acid polypeptide reads, in one-letter code: MKTKDNEVINSESEFSEKDVPNFIEIKKINKTYPDGYVAVKNINFEIKKGEFVTILGPSGCGKTTILKMIGGFELPTSGKILVNKIDIKDLPIQRRPTATVFQDYALFPNMNVEKNIAYGLTEIRKPIENVSADYQKESEKYFNDCLKKSKSKIKDIERKRDGFLKDIQKLENKINNSKILSEVNTMTEEEYEEKIETLEKEYFEKNKKELHKSIPVKVKFIEFINNTLSFFRINKNIDFKANETDELVQTYLKYEKAYRVNLITKQEIDYLNHKAADLDYWVSYWQNYPYQEKEWFDKKKLTRKLTKQEIKEEVQQIIKIIGLEGKEKKWPSDLSGGMQQRVALARALVIKPETLLLDEPLSALDAKVRAQMQQELKNLHKKFGITFILVTHDQEEALTLSDKIIVMSQGKIQQIGTPNEIYDLPANNWVANFIGKANILNATYLKGNKIKLFDNVLNADSRYKDKFKENEEVNVMIRPEDFDVVGKDKGKIKVTVLETTYKGLMWELICEFEGVLLTLEAVNKVNLEQEIYLTWDDEDMHIMKKDDENDTYTDESSEFLALTKNAFKKKIKEIKSKKNKNKVNGKKGDKNDN.

The 412-residue stretch at 24–435 (IEIKKINKTY…PANNWVANFI (412 aa)) folds into the ABC transporter domain. 57–64 (GPSGCGKT) serves as a coordination point for ATP. The tract at residues 125–304 (RKPIENVSAD…EWFDKKKLTR (180 aa)) is insert.

It belongs to the ABC transporter superfamily. Spermidine/putrescine importer (TC 3.A.1.11.1) family. The complex is composed of two ATP-binding proteins (PotA), two transmembrane proteins (PotB and PotC) and a solute-binding protein (PotD).

It localises to the cell membrane. The catalysed reaction is ATP + H2O + polyamine-[polyamine-binding protein]Side 1 = ADP + phosphate + polyamineSide 2 + [polyamine-binding protein]Side 1.. Functionally, part of the ABC transporter complex PotABCD involved in spermidine/putrescine import. Responsible for energy coupling to the transport system. This Malacoplasma penetrans (strain HF-2) (Mycoplasma penetrans) protein is Spermidine/putrescine import ATP-binding protein PotA.